We begin with the raw amino-acid sequence, 788 residues long: IQ motif and ubiquitin-like domain-containing protein (788 aa).

The interval 1–89 (MSDPEEERVA…SLGSASGSQD (89 aa)) is disordered. Basic and acidic residues predominate over residues 7–20 (ERVADSTAHYEEAG). Positions 31–54 (EAEGSDVMPEQDDEVQELTTESEE) are enriched in acidic residues. The span at 68–78 (KSDDSKPREEV) shows a compositional bias: basic and acidic residues. The span at 80 to 89 (SLGSASGSQD) shows a compositional bias: polar residues. Residues 127 to 203 (ATVKIVLIPA…VQVEVFSTLP (77 aa)) enclose the Ubiquitin-like domain. The region spanning 334–363 (RLHAVIVIQTSYRRWHAKRYVESLRKQKKL) is the IQ domain.

Component of the axonemal radial spoke 1 (RS1) complex, at least composed of spoke head proteins RSPH1, RSPH3B, RSPH9 and the cilia-specific component RSPH4A or sperm-specific component RSPH6A, spoke stalk proteins RSPH14, DNAJB13, DYDC1, ROPN1L and NME5, and the anchor protein IQUB. Does not appear to be part of radial spoke complexes 2 or 3 (RS2 or RS3). Interacts with CALM1. Interacts with DNAJB13. Interacts with DYNLL2. Interacts with NME5. Interacts with RSPH3. Interacts with RSPH9. Interacts with ZMYND10. Interacts with calmodulin; the interaction occurs in conditions of low but not high calcium. Expressed in the flagellum of sperm cells and cilia of tracheal epithelial cells (at protein level). High expression in testis, also present in brain and lung.

Its subcellular location is the cytoplasm. It localises to the cytoskeleton. The protein resides in the flagellum axoneme. The protein localises to the cell projection. It is found in the cilium. In terms of biological role, anchors the radial spoke 1 (RS1) complex to the A microtubule of outer doublet microtubules in axonemes. The triple radial spokes (RS1, RS2 and RS3) are required to modulate beating of the sperm flagellum. May play a role in inhibiting signaling via MAPK1/ERK2 and MAPK3/ERK1. Additionally, may play a role in the functioning of cilia. Not required for the functioning of tracheal or ependymal cilia. The protein is IQ motif and ubiquitin-like domain-containing protein (Iqub) of Mus musculus (Mouse).